The chain runs to 60 residues: Large ribosomal subunit protein bL32 (60 aa).

Positions 1-60 (MAVQQVKKSRSKRDMRRSHDSLTGPTLSTDKSTGELHLRHHVSPNGFYKGKKVVDTKSED) are disordered. Residues 7–16 (KKSRSKRDMR) are compositionally biased toward basic residues.

Belongs to the bacterial ribosomal protein bL32 family.

The chain is Large ribosomal subunit protein bL32 from Francisella philomiragia subsp. philomiragia (strain ATCC 25017 / CCUG 19701 / FSC 153 / O#319-036).